A 276-amino-acid chain; its full sequence is Vitamin B12-binding protein (276 aa).

The N-terminal stretch at 1-20 (MLVIRLIACTFLFITPSLLA) is a signal peptide. Residues 27–274 (RIISLAPHAT…QVCTYLKIAQ (248 aa)) enclose the Fe/B12 periplasmic-binding domain. Residue Y54 participates in cyanocob(III)alamin binding. A disulfide bond links C187 and C267.

Belongs to the BtuF family. As to quaternary structure, the complex is composed of two ATP-binding proteins (BtuD), two transmembrane proteins (BtuC) and a solute-binding protein (BtuF).

It localises to the periplasm. Part of the ABC transporter complex BtuCDF involved in vitamin B12 import. Binds vitamin B12 and delivers it to the periplasmic surface of BtuC. This is Vitamin B12-binding protein from Vibrio cholerae serotype O1 (strain ATCC 39541 / Classical Ogawa 395 / O395).